Reading from the N-terminus, the 422-residue chain is Serine hydroxymethyltransferase (422 aa).

(6S)-5,6,7,8-tetrahydrofolate is bound by residues Leu-118 and 122-124; that span reads GHL. Residue Lys-227 is modified to N6-(pyridoxal phosphate)lysine. Position 242 (Glu-242) interacts with (6S)-5,6,7,8-tetrahydrofolate.

This sequence belongs to the SHMT family. Homodimer. Pyridoxal 5'-phosphate serves as cofactor.

The protein localises to the cytoplasm. It catalyses the reaction (6R)-5,10-methylene-5,6,7,8-tetrahydrofolate + glycine + H2O = (6S)-5,6,7,8-tetrahydrofolate + L-serine. The protein operates within one-carbon metabolism; tetrahydrofolate interconversion. It functions in the pathway amino-acid biosynthesis; glycine biosynthesis; glycine from L-serine: step 1/1. In terms of biological role, catalyzes the reversible interconversion of serine and glycine with tetrahydrofolate (THF) serving as the one-carbon carrier. This reaction serves as the major source of one-carbon groups required for the biosynthesis of purines, thymidylate, methionine, and other important biomolecules. Also exhibits THF-independent aldolase activity toward beta-hydroxyamino acids, producing glycine and aldehydes, via a retro-aldol mechanism. The protein is Serine hydroxymethyltransferase of Sulfurihydrogenibium sp. (strain YO3AOP1).